The following is an 87-amino-acid chain: Large ribosomal subunit protein bL31B (87 aa).

It belongs to the bacterial ribosomal protein bL31 family. Type B subfamily. Part of the 50S ribosomal subunit.

This Escherichia coli O9:H4 (strain HS) protein is Large ribosomal subunit protein bL31B.